Here is a 270-residue protein sequence, read N- to C-terminus: 3-methyl-2-oxobutanoate hydroxymethyltransferase (270 aa).

Residues Asp-50 and Asp-89 each coordinate Mg(2+). 3-methyl-2-oxobutanoate is bound by residues 50–51 (DS), Asp-89, and Lys-118. Glu-120 contacts Mg(2+). Glu-187 acts as the Proton acceptor in catalysis.

This sequence belongs to the PanB family. Homodecamer; pentamer of dimers. The cofactor is Mg(2+).

The protein localises to the cytoplasm. The enzyme catalyses 3-methyl-2-oxobutanoate + (6R)-5,10-methylene-5,6,7,8-tetrahydrofolate + H2O = 2-dehydropantoate + (6S)-5,6,7,8-tetrahydrofolate. The protein operates within cofactor biosynthesis; (R)-pantothenate biosynthesis; (R)-pantoate from 3-methyl-2-oxobutanoate: step 1/2. Functionally, catalyzes the reversible reaction in which hydroxymethyl group from 5,10-methylenetetrahydrofolate is transferred onto alpha-ketoisovalerate to form ketopantoate. This chain is 3-methyl-2-oxobutanoate hydroxymethyltransferase, found in Helicobacter pylori (strain G27).